Reading from the N-terminus, the 270-residue chain is Regulator of G-protein signaling rgs-10 (270 aa).

The 118-residue stretch at 135-252 (SPETLAASEY…LEDPLYLDLV (118 aa)) folds into the RGS domain.

Functionally, shown to have a role in viability and embryogenesis. The sequence is that of Regulator of G-protein signaling rgs-10 (rgs-10) from Caenorhabditis elegans.